A 168-amino-acid chain; its full sequence is uncharacterized protein (168 aa).

5 consecutive transmembrane segments (helical) span residues 15–33, 41–57, 73–93, 108–128, and 129–149; these read YLTV…LAVL, LSLT…ASSL, WIGL…GALL, VPLL…WVLN, and NLIA…VLAI.

It is found in the cell membrane. This is an uncharacterized protein from Haemophilus influenzae (strain ATCC 51907 / DSM 11121 / KW20 / Rd).